A 949-amino-acid polypeptide reads, in one-letter code: Glutamate receptor ionotropic, kainate 1 (949 aa).

A signal peptide spans 1–30; it reads MERSTVLIQPGLWTRDTSWTLLYFLCYILP. At 31-576 the chain is on the extracellular side; the sequence is QTSPQVLRIG…VFSFLNPLSP (546 aa). 7 N-linked (GlcNAc...) asparagine glycosylation sites follow: asparagine 68, asparagine 74, asparagine 276, asparagine 379, asparagine 428, asparagine 439, and asparagine 446. L-glutamate is bound by residues proline 531, threonine 533, and arginine 538. Asparagine 561 carries an N-linked (GlcNAc...) asparagine glycan. The chain crosses the membrane as a helical span at residues 577-597; the sequence is DIWMYVLLACLGVSCVLFVIA. The Cytoplasmic segment spans residues 598-653; that stretch reads RFTPYEWYNPHPCNPDSDVVENNFTLLNSFWFGVGALMQQGSELMPKALSTRIVGG. A helical transmembrane segment spans residues 654–674; sequence IWWFFTLIIISSYTANLAAFL. At 675–834 the chain is on the extracellular side; it reads TVERMESPID…KEASALGVEN (160 aa). Positions 704 and 705 each coordinate L-glutamate. A Phosphoserine; by PKC modification is found at serine 725. Glutamate 753 provides a ligand contact to L-glutamate. Threonine 761 carries the phosphothreonine; by PKC modification. A disulfide bridge links cysteine 765 with cysteine 819. Asparagine 766 carries N-linked (GlcNAc...) asparagine glycosylation. Residues 835 to 855 traverse the membrane as a helical segment; the sequence is IGGIFIVLAAGLVLSVFVAIG. The Cytoplasmic segment spans residues 856–949; it reads EFLYKSRKNN…RRTQRKETVA (94 aa).

It belongs to the glutamate-gated ion channel (TC 1.A.10.1) family. GRIK1 subfamily. As to quaternary structure, homotetramer or heterotetramer of pore-forming glutamate receptor subunits. Tetramers may be formed by the dimerization of dimers. Can form functional heteromeric receptors with GRIK4 and GRIK5. Interacts with KLHL17. In terms of tissue distribution, expressed in the olfactory bulb (at protein level). Expressed in subsets of neurons throughout the developing and adult central and peripheral nervous systems. In the CNS principally in the medial amygdaloid nuclei, medial habenulae, pyriform and cingulate cortices, and Purkinje cell layer. Also highly expressed in embryonic and adult dorsal root ganglia. Expressed at high levels in the trigeminal ganglion neurons.

Its subcellular location is the cell membrane. The protein localises to the postsynaptic cell membrane. It carries out the reaction Ca(2+)(in) = Ca(2+)(out). Functionally, ionotropic glutamate receptor that functions as a cation-permeable ligand-gated ion channel, gated by L-glutamate and the glutamatergic agonist kainic acid. L-glutamate acts as an excitatory neurotransmitter at many synapses in the central nervous system. Binding of the excitatory neurotransmitter L-glutamate induces a conformation change, leading to the opening of the cation channel, and thereby converts the chemical signal to an electrical impulse. The receptor then desensitizes rapidly and enters a transient inactive state, characterized by the presence of bound agonist. The protein is Glutamate receptor ionotropic, kainate 1 (Grik1) of Rattus norvegicus (Rat).